Here is a 384-residue protein sequence, read N- to C-terminus: MATASARWNHVWVGTETGILKGVNLQRKHAANFTPSGQPRREEAVNALCWGTGGETQILVGCADRTVRYFNAEEGTFLSQRYCPGGEGTFRGLAQADGTLITCVDSGILRVWCENDKEASSDPLLELKVGPGVCRMRQDPTHTHVVATCGKENALKVWDLQGSEEPVFRAKNVRNDWLDLRVPIWDQDTQFLPGSQKLVTCTGYHQVRVYDPVSPQRRPVLEATYGEYPLTAMTLTPEGNSVIVGNTHGQLAEIDFRQGRLLGCLKGLAGSVRGLQCHPSKPLLASCGLDRVLRIHRIRNPRGLEHKVYLKSQLNCLLLSGRDNWEDEPQEPQEPNQVPSEDTETDELWASLEAAAKRKLPDLDQTQGALQRRKKKKRPGSTSP.

WD repeat units follow at residues 40 to 80 (RREE…FLSQ), 83 to 122 (CPGG…ASSD), 128 to 168 (KVGP…EPVF), 179 to 220 (DLRV…RRPV), 224 to 266 (TYGE…GCLK), and 267 to 306 (GLAG…GLEH). Residue Ser-214 is modified to Phosphoserine. At Lys-311 the chain carries N6-methyllysine. The interval 320–384 (SGRDNWEDEP…KKKRPGSTSP (65 aa)) is required for nucleolar and nuclear location. Positions 323-384 (DNWEDEPQEP…KKKRPGSTSP (62 aa)) are disordered. Residues 371–384 (QRRKKKKRPGSTSP) are compositionally biased toward basic residues.

As to quaternary structure, isoform 1 interacts (through WDR repeats) with NVL; the interaction is independent of RNA or pre-60S ribosome particles. Isoform 2 does not interact with NVL. Interacts with MTREX; the interaction dissociation in a late stage of rRNA synthesis is required for appropriate maturation of pre-60S particles and depends on the ATPase activity of NVL.

It localises to the nucleus. The protein resides in the nucleolus. Regulatory protein of the MTREX-exosome complex involved in the synthesis of the 60S ribosomal subunit. Participates in an early cleavage of the pre-rRNA processing pathway in cooperation with NVL. Required for blastocyst formation, is necessary for RNA transcription, processing and/or stability during preimplantation development. This is WD repeat-containing protein 74 (Wdr74) from Mus musculus (Mouse).